A 252-amino-acid chain; its full sequence is Glucosamine-6-phosphate deaminase (252 aa).

Catalysis depends on Asp-67, which acts as the Proton acceptor; for enolization step. Asn-137 serves as the catalytic For ring-opening step. The active-site Proton acceptor; for ring-opening step is the His-139. The For ring-opening step role is filled by Glu-144.

Belongs to the glucosamine/galactosamine-6-phosphate isomerase family. NagB subfamily.

It carries out the reaction alpha-D-glucosamine 6-phosphate + H2O = beta-D-fructose 6-phosphate + NH4(+). It participates in amino-sugar metabolism; N-acetylneuraminate degradation; D-fructose 6-phosphate from N-acetylneuraminate: step 5/5. Catalyzes the reversible isomerization-deamination of glucosamine 6-phosphate (GlcN6P) to form fructose 6-phosphate (Fru6P) and ammonium ion. This Staphylococcus aureus (strain MRSA252) protein is Glucosamine-6-phosphate deaminase.